Reading from the N-terminus, the 148-residue chain is DnaJ homolog subfamily C member 24 (148 aa).

Residues 10–81 (DWYSILGADP…ETKKKYDLQR (72 aa)) form the J domain. Residues 92–147 (VDAQVRLEEMSWNQGDESFFLSCRCGGKYTVSKDEAQEATLISCDACSLIVELLHQ) enclose the DPH-type MB domain. Zn(2+)-binding residues include Cys114, Cys116, Cys135, and Cys138.

Belongs to the DPH4 family. In terms of assembly, monomer and homooligomer. Iron binding promotes oligomerization. Detected in heart, brain, spleen, lung, liver, kidney and testis.

The protein localises to the cytoplasm. The protein resides in the cytoskeleton. It functions in the pathway protein modification; peptidyl-diphthamide biosynthesis. In terms of biological role, the iron-bound form is redox-active and can function as electron carrier. Stimulates the ATPase activity of several Hsp70-type chaperones. This ability is enhanced by iron-binding. Plays a role in the diphthamide biosynthesis, a post-translational modification of histidine which occurs in translation elongation factor 2 (EEF2). This chain is DnaJ homolog subfamily C member 24 (Dnajc24), found in Mus musculus (Mouse).